A 343-amino-acid chain; its full sequence is tRNA N6-adenosine threonylcarbamoyltransferase (343 aa).

Fe cation contacts are provided by His115 and His119. Residues 138 to 142 (LVSGA), Asp171, Gly184, and Asn276 contribute to the substrate site. Asp304 is a binding site for Fe cation.

The protein belongs to the KAE1 / TsaD family. It depends on Fe(2+) as a cofactor.

Its subcellular location is the cytoplasm. The enzyme catalyses L-threonylcarbamoyladenylate + adenosine(37) in tRNA = N(6)-L-threonylcarbamoyladenosine(37) in tRNA + AMP + H(+). Its function is as follows. Required for the formation of a threonylcarbamoyl group on adenosine at position 37 (t(6)A37) in tRNAs that read codons beginning with adenine. Is involved in the transfer of the threonylcarbamoyl moiety of threonylcarbamoyl-AMP (TC-AMP) to the N6 group of A37, together with TsaE and TsaB. TsaD likely plays a direct catalytic role in this reaction. The sequence is that of tRNA N6-adenosine threonylcarbamoyltransferase from Buchnera aphidicola subsp. Cinara cedri (strain Cc).